The sequence spans 229 residues: Transmembrane 4 L6 family member 20 (229 aa).

The Lumenal portion of the chain corresponds to 1–14; the sequence is MTCCEGWTSCNGFS. Residues 15 to 35 traverse the membrane as a helical segment; the sequence is LLVLLLLGVVLNAIPLIVSLV. Topologically, residues 36–44 are cytoplasmic; it reads EEDQFSQNP. The chain crosses the membrane as a helical span at residues 45-65; it reads ISCFEWWFPGIIGAGLMAIPA. The Lumenal portion of the chain corresponds to 66 to 83; the sequence is TTMSLTARKRACCNNRTG. A helical transmembrane segment spans residues 84-104; the sequence is MFLSSLFSVITVIGALYCMLI. The Cytoplasmic segment spans residues 105 to 185; it reads SIQALLKGPL…HFDSEENKHR (81 aa). Residues 186 to 206 traverse the membrane as a helical segment; that stretch reads LIHFSVFLGLLLVGILEVLFG. The Lumenal portion of the chain corresponds to 207–229; it reads LSQIVIGFLGCLCGVSKRRSQIV.

This sequence belongs to the L6 tetraspanin family. In terms of processing, glycosylated at Asn-132, Asn-148 and Asn-163 in presence of ceramide which inverts the orientation of TM4SF20 in membranes exposing these residues to the endoplasmic reticulum lumen. Cleaved by signal peptidase at Ser-14 but the peptide does not act as a signal peptide. Cleavage is inhibited by ceramide which inverts the orientation of TM4SF20 in membranes exposing the N-terminus to the cytosol and not to the endoplasmic reticulum lumen. In terms of tissue distribution, expressed in the brain, with high levels in the parietal lobe, hippocampus, pons, white matter and cerebellum.

It localises to the membrane. Its subcellular location is the endoplasmic reticulum membrane. In terms of biological role, polytopic transmembrane protein that inhibits regulated intramembrane proteolysis (RIP) of CREB3L1, inhibiting its activation and the induction of collagen synthesis. In response to ceramide, which alters TM4SF20 membrane topology, stimulates RIP activation of CREB3L1. Ceramide reverses the direction through which transmembrane helices are translocated into the endoplasmic reticulum membrane during translation of TM4SF20, this mechanism is called 'regulated alternative translocation' (RAT) and regulates the function of the transmembrane protein. This is Transmembrane 4 L6 family member 20 (TM4SF20) from Homo sapiens (Human).